The sequence spans 264 residues: Thiazole synthase (264 aa).

The active-site Schiff-base intermediate with DXP is the K106. 1-deoxy-D-xylulose 5-phosphate-binding positions include G167, 193-194 (AG), and 215-216 (NS).

It belongs to the ThiG family. In terms of assembly, homotetramer. Forms heterodimers with either ThiH or ThiS.

It is found in the cytoplasm. The enzyme catalyses [ThiS sulfur-carrier protein]-C-terminal-Gly-aminoethanethioate + 2-iminoacetate + 1-deoxy-D-xylulose 5-phosphate = [ThiS sulfur-carrier protein]-C-terminal Gly-Gly + 2-[(2R,5Z)-2-carboxy-4-methylthiazol-5(2H)-ylidene]ethyl phosphate + 2 H2O + H(+). It functions in the pathway cofactor biosynthesis; thiamine diphosphate biosynthesis. In terms of biological role, catalyzes the rearrangement of 1-deoxy-D-xylulose 5-phosphate (DXP) to produce the thiazole phosphate moiety of thiamine. Sulfur is provided by the thiocarboxylate moiety of the carrier protein ThiS. In vitro, sulfur can be provided by H(2)S. In Prochlorococcus marinus (strain AS9601), this protein is Thiazole synthase.